Consider the following 116-residue polypeptide: UPF0342 protein BH1149 (116 aa).

This sequence belongs to the UPF0342 family.

The polypeptide is UPF0342 protein BH1149 (Halalkalibacterium halodurans (strain ATCC BAA-125 / DSM 18197 / FERM 7344 / JCM 9153 / C-125) (Bacillus halodurans)).